Consider the following 97-residue polypeptide: High mobility group protein homolog NHP1 (97 aa).

The interval Met-1–Lys-24 is disordered. The segment at residues Pro-23–Ala-93 is a DNA-binding region (HMG box).

It localises to the nucleus. In Babesia bovis, this protein is High mobility group protein homolog NHP1.